Reading from the N-terminus, the 314-residue chain is MIEFEKPNIHKVEETDNYGKFVVEPLERGYGTTLGNSLRRVLIASLPGAAITSMQIDGVLHEFSTVEGVTEDVTQIILNLKKVSLKLDSEDQKNLELDVKGPAEVTASDIQGDNEVTILNPDLHIATVADGAELHIKLTADKGRGYLSANDNKARMDDLAIGVLPIDSIYTPIERVNYTVENARVGQRNDYDKLTLDVWTDGSLTPTEAVSLGAKILTEHLAMFVDLTETAQNAQVMVEKEETHKEKMLEMTIEELDLSVRSYNCLKRAGINTVKELTDRTVSDMMKVRNLGQKSLEEIKLKLNDLGVSFRQDD.

Residues 1-228 (MIEFEKPNIH…EHLAMFVDLT (228 aa)) form an alpha N-terminal domain (alpha-NTD) region. The tract at residues 245–314 (KEKMLEMTIE…DLGVSFRQDD (70 aa)) is alpha C-terminal domain (alpha-CTD).

The protein belongs to the RNA polymerase alpha chain family. In terms of assembly, homodimer. The RNAP catalytic core consists of 2 alpha, 1 beta, 1 beta' and 1 omega subunit. When a sigma factor is associated with the core the holoenzyme is formed, which can initiate transcription.

It catalyses the reaction RNA(n) + a ribonucleoside 5'-triphosphate = RNA(n+1) + diphosphate. Functionally, DNA-dependent RNA polymerase catalyzes the transcription of DNA into RNA using the four ribonucleoside triphosphates as substrates. The protein is DNA-directed RNA polymerase subunit alpha of Limosilactobacillus reuteri (strain DSM 20016) (Lactobacillus reuteri).